The following is a 612-amino-acid chain: MASWLLSTLLFLSPSLVSAKSAADYYVHSLPGAPEGPLLKMHAGHIEVDPQNNGNLFFWHYQNRHIANRQRTVIWLNGGPGCSSMDGALMEVGPYRLKDNETLTYNEGSWDEFANLLFVDQPVGTGFSYVNTDSYLHELDEMSAQFIVFLEEWFRLFPEYERDDIYIAGESYAGQHIPYIAKAIQERNKNVQGKTIASWNLKGLLIGNGWISPNEQYMSYLPYAYEEGLIKEGSRTAKELEVLQSVCKSRLETGKNKVHLNDCEKVMNALLDKTVEDNKCLNMYDIRLRDTTDACGMNWPTDLEDVKPYLQREDVVKALNINPEKKSGWVECSGAVSSAFNPQKSPPSVQLLPGLLESGLQILLFSGDKDLICNHVGTEQLINNMKWNGGTGFETSPGVWAPRHDWSFEGEPAGIYQYARNLTYVLIYNASHMVPYDLPRQSRDMLDRFMNVDIASIGGSPADSRIDGEKLPQTSVGGHPNSTAAEEQEKERIKETEWKAYAKSGEAVLLVVIIGVLVWGFFIWRSRRRHQGYRGVWHKDMSGSSVLERFHNKRTGGADVEAGDFDEAELDDLHSPDLEREHYAVGEDSDEDDISRQHSQQASRAGGSHNLS.

A signal peptide spans 1–19; it reads MASWLLSTLLFLSPSLVSA. Topologically, residues 20-503 are lumenal; the sequence is KSAADYYVHS…KETEWKAYAK (484 aa). N-linked (GlcNAc...) asparagine glycosylation is present at N100. Catalysis depends on residues S171 and D370. Residues N421 and N429 are each glycosylated (N-linked (GlcNAc...) asparagine). The active site involves H432. A disordered region spans residues 460–489; the sequence is SPADSRIDGEKLPQTSVGGHPNSTAAEEQE. Residues 472–485 show a composition bias toward polar residues; it reads PQTSVGGHPNSTAA. The N-linked (GlcNAc...) asparagine glycan is linked to N481. Residues 504–524 traverse the membrane as a helical segment; it reads SGEAVLLVVIIGVLVWGFFIW. Residues 525 to 612 lie on the Cytoplasmic side of the membrane; that stretch reads RSRRRHQGYR…SRAGGSHNLS (88 aa). Residues 557 to 612 form a disordered region; that stretch reads GADVEAGDFDEAELDDLHSPDLEREHYAVGEDSDEDDISRQHSQQASRAGGSHNLS. Over residues 561-570 the composition is skewed to acidic residues; sequence EAGDFDEAEL. A compositionally biased stretch (basic and acidic residues) spans 571–585; sequence DDLHSPDLEREHYAV. The segment covering 597–612 has biased composition (polar residues); that stretch reads QHSQQASRAGGSHNLS.

The protein belongs to the peptidase S10 family.

It is found in the golgi apparatus. Its subcellular location is the trans-Golgi network membrane. It carries out the reaction Preferential release of a C-terminal arginine or lysine residue.. Functionally, protease with a carboxypeptidase B-like function involved in the C-terminal processing of the lysine and arginine residues from protein precursors. Promotes cell fusion and is involved in the programmed cell death. This is Pheromone-processing carboxypeptidase kex1 (kex1) from Aspergillus niger (strain ATCC MYA-4892 / CBS 513.88 / FGSC A1513).